A 94-amino-acid polypeptide reads, in one-letter code: Transcription factor PRE6 (94 aa).

Positions 1–20 (MSSRRSSRSRQSGSSRISDD) are disordered. A bHLH domain is found at 6–60 (SSRSRQSGSSRISDDQISDLVSKLQHLIPELRRRRSDKVSASKVLQETCNYIRNL).

Belongs to the bHLH protein family. As to quaternary structure, interacts with HFR1.

Its subcellular location is the cytoplasm. It localises to the nucleus. Atypical and probable non DNA-binding bHLH transcription factor that regulates light-mediated responses in day light conditions by binding and inhibiting the activity of the bHLH transcription factor HFR1, a critical regulator of light signaling and shade avoidance. Forms non-functional heterodimers with HFR1, causing liberation and activation of PIF4 from the transcriptionally inactive HFR1-PIF4 complex. The polypeptide is Transcription factor PRE6 (PRE6) (Arabidopsis thaliana (Mouse-ear cress)).